The following is a 542-amino-acid chain: Putative serine/threonine-protein kinase L205 (542 aa).

Over residues 20–30 (FEKKSVGHNSD) the composition is skewed to basic and acidic residues. The disordered stretch occupies residues 20-49 (FEKKSVGHNSDDEYDDTVPYNEDDETSEEE). Acidic residues predominate over residues 31–49 (DEYDDTVPYNEDDETSEEE). In terms of domain architecture, Protein kinase spans 69 to 538 (YLLLKKIGSG…ADELLKHPWL (470 aa)). Residues 75–83 (IGSGNNASV) and K98 each bind ATP. D201 functions as the Proton acceptor in the catalytic mechanism. Positions 278 to 314 (EELIPDDPDNNEKYYDSTDSEEYDYSDNSDYYDDDED) are disordered. Residues 295–314 (TDSEEYDYSDNSDYYDDDED) are compositionally biased toward acidic residues.

Belongs to the protein kinase superfamily. Ser/Thr protein kinase family.

It catalyses the reaction L-seryl-[protein] + ATP = O-phospho-L-seryl-[protein] + ADP + H(+). It carries out the reaction L-threonyl-[protein] + ATP = O-phospho-L-threonyl-[protein] + ADP + H(+). The protein is Putative serine/threonine-protein kinase L205 of Acanthamoeba polyphaga (Amoeba).